A 503-amino-acid chain; its full sequence is Long-chain-fatty-acid--CoA ligase FadD13 (503 aa).

This sequence belongs to the ATP-dependent AMP-binding enzyme family. Homodimer.

The protein localises to the cell membrane. It carries out the reaction a long-chain fatty acid + ATP + CoA = a long-chain fatty acyl-CoA + AMP + diphosphate. Its pathway is lipid metabolism; fatty acid biosynthesis. Its function is as follows. Required for maintaining the appropriate mycolic acid composition and permeability of the envelope on its exposure to acidic pH. Catalyzes the activation of long-chain fatty acids as acyl-coenzyme A (acyl-CoA), which are then transferred to the multifunctional polyketide synthase (PKS) type III for further chain extension. The protein is Long-chain-fatty-acid--CoA ligase FadD13 (fadD13) of Mycobacterium tuberculosis (strain CDC 1551 / Oshkosh).